The primary structure comprises 568 residues: PCNA-interacting partner (568 aa).

The segment at 442 to 555 (QIPTCVHPAP…RNNKAVSKKL (114 aa)) is disordered. Residues 488–500 (NAWNQTGGKSTQP) show a composition bias toward polar residues. Over residues 515 to 527 (ANRECTEQGREEN) the composition is skewed to basic and acidic residues.

Belongs to the PARI family.

The protein resides in the cytoplasm. The protein localises to the nucleus. Required to suppress inappropriate homologous recombination, thereby playing a central role DNA repair and in the maintenance of genomic stability. In Danio rerio (Zebrafish), this protein is PCNA-interacting partner (parpbp).